A 30-amino-acid chain; its full sequence is Trypsin inhibitor 1 (30 aa).

3 cysteine pairs are disulfide-bonded: cysteine 4-cysteine 21, cysteine 11-cysteine 23, and cysteine 17-cysteine 29.

The protein belongs to the protease inhibitor I7 (squash-type serine protease inhibitor) family.

It is found in the secreted. Functionally, inhibits trypsin. This chain is Trypsin inhibitor 1, found in Citrullus lanatus (Watermelon).